The following is a 436-amino-acid chain: Kynureninase (436 aa).

Pyridoxal 5'-phosphate-binding positions include leucine 88, threonine 89, 116–119 (FPSD), aspartate 202, histidine 205, and tyrosine 227. Lysine 228 is modified (N6-(pyridoxal phosphate)lysine). Pyridoxal 5'-phosphate is bound by residues tryptophan 280 and asparagine 308.

This sequence belongs to the kynureninase family. Homodimer. Pyridoxal 5'-phosphate serves as cofactor.

The protein localises to the cytoplasm. It catalyses the reaction L-kynurenine + H2O = anthranilate + L-alanine + H(+). It carries out the reaction 3-hydroxy-L-kynurenine + H2O = 3-hydroxyanthranilate + L-alanine + H(+). Its pathway is amino-acid degradation; L-kynurenine degradation; L-alanine and anthranilate from L-kynurenine: step 1/1. It participates in cofactor biosynthesis; NAD(+) biosynthesis; quinolinate from L-kynurenine: step 2/3. Functionally, catalyzes the cleavage of L-kynurenine (L-Kyn) and L-3-hydroxykynurenine (L-3OHKyn) into anthranilic acid (AA) and 3-hydroxyanthranilic acid (3-OHAA), respectively. In Schistosoma japonicum (Blood fluke), this protein is Kynureninase.